The following is a 46-amino-acid chain: Cuticle protein 4.9 (46 aa).

Its function is as follows. Component of the cuticle of migratory locust which contains more than 100 different structural proteins. This is Cuticle protein 4.9 from Locusta migratoria (Migratory locust).